The following is a 303-amino-acid chain: Hemolysin E (303 aa).

The cysteines at positions 87 and 285 are disulfide-linked. A helical transmembrane segment spans residues 179-199 (AGAAAGIVAGPFGLIISYSIA).

This sequence belongs to the hemolysin E family. In terms of assembly, monomer and oligomer. In periplasm, it is present as a monomer, while in outer membrane vesicles, it oligomerizes to form a pore structure that is active. The pore is formed by a dodecamer. In periplasm, it forms a disulfide bond, which prevents the oligomerization. In outer membrane vesicles, the redox status prevents formation of the disulfide bond, leading to oligomerization and pore formation.

It is found in the secreted. The protein resides in the periplasm. Its subcellular location is the host cell membrane. Functionally, toxin, which has some hemolytic activity towards mammalian cells. Acts by forming a pore-like structure upon contact with mammalian cells. The sequence is that of Hemolysin E (hlyE) from Salmonella typhi.